The primary structure comprises 82 residues: Omega-conotoxin-like TxMKLT1-031 (82 aa).

The first 22 residues, 1-22 (MKLTCMMIVAVLFLTAWTLVMA), serve as a signal peptide directing secretion. The propeptide occupies 23–49 (DDSNNGLANLFSKSRDEMEDPEASKLE). Cystine bridges form between Cys-53–Cys-71, Cys-60–Cys-76, and Cys-70–Cys-81.

The protein belongs to the conotoxin O1 superfamily. In terms of tissue distribution, expressed by the venom duct.

It localises to the secreted. Omega-conotoxins act at presynaptic membranes, they bind and block voltage-gated calcium channels (Cav). This is Omega-conotoxin-like TxMKLT1-031 from Conus textile (Cloth-of-gold cone).